A 444-amino-acid chain; its full sequence is ATP-dependent RNA helicase sub2 (444 aa).

Positions 59–87 (TGFREFLLKPELLRAISWCGFEHPSEVQQ) match the Q motif motif. Residues 90 to 265 (IPQAILGTDV…KKFMQNPLEI (176 aa)) enclose the Helicase ATP-binding domain. 103–110 (AKSGLGKT) lines the ATP pocket. The DECD box signature appears at 212 to 215 (DECD). Residues 277–438 (GLQQYYIKLE…EYPEGGVDSA (162 aa)) form the Helicase C-terminal domain.

Belongs to the DEAD box helicase family. DECD subfamily.

It is found in the nucleus. It carries out the reaction ATP + H2O = ADP + phosphate + H(+). ATP-binding RNA helicase involved in transcription elongation and required for the export of mRNA out of the nucleus. SUB2 also plays a role in pre-mRNA splicing and spliceosome assembly. May be involved in rDNA and telomeric silencing, and maintenance of genome integrity. This is ATP-dependent RNA helicase sub2 (sub2) from Sclerotinia sclerotiorum (strain ATCC 18683 / 1980 / Ss-1) (White mold).